A 246-amino-acid polypeptide reads, in one-letter code: Transcription factor A, mitochondrial (246 aa).

The transit peptide at Met-1–Phe-42 directs the protein to the mitochondrion. The segment at residues Pro-50–Gln-118 is a DNA-binding region (HMG box 1). Ser-56 and Ser-61 each carry phosphoserine; by PKA. Position 122 is a phosphothreonine (Thr-122). Positions Pro-155–Glu-219 form a DNA-binding region, HMG box 2. At Ser-160 the chain carries Phosphoserine; by PKA. Phosphoserine occurs at positions 193 and 195.

As to quaternary structure, monomer; binds DNA as a monomer. Homodimer. Component of the mitochondrial transcription initiation complex, composed at least of TFB2M, TFAM and POLRMT. In this complex TFAM recruits POLRMT to the promoter whereas TFB2M induces structural changes in POLRMT to enable promoter opening and trapping of the DNA non-template strand. Upon metabolic stress, forms a complex composed of FOXO3, SIRT3, TFAM and POLRMT. Interacts with TFB1M and TFB2M. Interacts with CLPX; this enhances DNA-binding. In terms of processing, phosphorylation by PKA within the HMG box 1 impairs DNA binding and promotes degradation by the AAA+ Lon protease.

Its subcellular location is the mitochondrion. It localises to the mitochondrion matrix. The protein resides in the mitochondrion nucleoid. In terms of biological role, binds to the mitochondrial light strand promoter and functions in mitochondrial transcription regulation. Component of the mitochondrial transcription initiation complex, composed at least of TFB2M, TFAM and POLRMT that is required for basal transcription of mitochondrial DNA. In this complex, TFAM recruits POLRMT to a specific promoter whereas TFB2M induces structural changes in POLRMT to enable promoter opening and trapping of the DNA non-template strand. Required for accurate and efficient promoter recognition by the mitochondrial RNA polymerase. Promotes transcription initiation from the HSP1 and the light strand promoter by binding immediately upstream of transcriptional start sites. Is able to unwind DNA. Bends the mitochondrial light strand promoter DNA into a U-turn shape via its HMG boxes. Required for maintenance of normal levels of mitochondrial DNA. May play a role in organizing and compacting mitochondrial DNA. This chain is Transcription factor A, mitochondrial, found in Sus scrofa (Pig).